The chain runs to 218 residues: Capsid protein (218 aa).

Met1 bears the N-acetylmethionine; by host mark. Positions 1–30 are disordered; the sequence is MDKSGSPNASRTSRRRRPRRGSRSASGADA. Residues 12 to 22 show a composition bias toward basic residues; that stretch reads TSRRRRPRRGS.

Belongs to the cucumovirus capsid protein family.

Its subcellular location is the virion. Its function is as follows. Capsid protein. Probably binds RNA and plays a role in packaging. The chain is Capsid protein from Cucumber mosaic virus (strain Q) (CMV).